Reading from the N-terminus, the 2590-residue chain is 5-methylorsellinic acid synthase (2590 aa).

The interval 6–255 is N-terminal acylcarrier protein transacylase domain (SAT); that stretch reads LLCGSQAIQW…HNQVNRELFA (250 aa). One can recognise a Ketosynthase family 3 (KS3) domain in the interval 369 to 784; it reads GDSIAIVGMG…GSNAALIVTQ (416 aa). Catalysis depends on for beta-ketoacyl synthase activity residues C534, H669, and H707. The tract at residues 891–1191 is malonyl-CoA:ACP transacylase (MAT) domain; that stretch reads LAFGGQTGNV…HAVNLGGPEP (301 aa). The active-site For acyl/malonyl transferase activity is S978. The segment at 1263-1393 is N-terminal hotdog fold; sequence PKLVSFVKYL…GTVNISSLTS (131 aa). The region spanning 1263–1569 is the PKS/mFAS DH domain; the sequence is PKLVSFVKYL…FAKVPTASLK (307 aa). Positions 1267-1568 are product template (PT) domain; the sequence is SFVKYLDSNR…RFAKVPTASL (302 aa). The Proton acceptor; for dehydratase activity role is filled by H1297. The segment at 1421–1569 is C-terminal hotdog fold; that stretch reads TSAIQGSLVY…FAKVPTASLK (149 aa). The active-site Proton donor; for dehydratase activity is the D1481. The tract at residues 1587–1612 is disordered; that stretch reads LKVTEPSANVPKAQPVSTYPKPMKPA. Carrier domains are found at residues 1617–1691 and 1736–1812; these read AQIR…ASGT and SAQA…IPKP. 2 positions are modified to O-(pantetheine 4'-phosphoryl)serine: S1651 and S1772. Positions 1980–2212 are methyltransferase (CMeT) domain; that stretch reads QHRGEHKLLN…GFRHVDWSDD (233 aa). Residues 2282-2590 are thioesterase (TE) domain; sequence LMIHGGGHIM…EGYEFLLRHL (309 aa).

The catalysed reaction is 3 malonyl-CoA + acetyl-CoA + S-adenosyl-L-methionine + H(+) = 5-methylorsellinate + S-adenosyl-L-homocysteine + 3 CO2 + 4 CoA. It functions in the pathway secondary metabolite biosynthesis. In terms of biological role, non-reducing polyketide synthase; part of the cluster A that mediates the biosynthesis of azasperpyranones, members of the azaphilone family that exhibit anti-cancer activities. Azasperpyranones are synthesized by 2 clusters, A and B. Cluster A is responsible for the production of the polyhydric phenol moiety while the azaphilonoid scaffold is produced by the cluster B. The non-reducing polyketide synthase ATEG_03629 produces 5-methyl orsellinic acid, which is then reduced to 5-methyl orsellinic aldehyde by the NRPS-like protein ATEG_03630. 5-methyl orsellinic aldehyde is then first hydroxylated by the FAD-dependent monooxygenase ATEG_03635 and subsequently hydroxylated by the cytochrome P450 monooxygenase ATEG_03631 to produce the unstable polyhydric phenol precursor of azasperpyranones. On the other hand, the polyketide synthase ATEG_07659 is responsible for producing the 3,5-dimethyloctadienone moiety from acetyl-CoA, three malonyl-CoA, and two S-adenosyl methionines (SAM). The 3,5-dimethyloctadienone moiety is then loaded onto the SAT domain of ATEG_07661 and extended with four malonyl-CoA and one SAM, which leads to the formation of 2,4-dihydroxy-6-(5,7-dimethyl-2-oxo-trans-3-trans-5-nonadienyl)-3-methylbenzaldehyde (compound 8) after reductive release and aldol condensation. The FAD-dependent monooxygenase ATEG_07662 is the next enzyme in the biosynthesis sequence and hydroxylates the side chain at the benzylic position of compound 8. In Aspergillus nidulans, afoF, the ortholog of the FAD-dependent oxygenase ATEG_07660, is the key enzyme for the biosynthesis of asperfuranone by catalyzing the hydroxylation at C-8 of to prevent the formation of a six-membered ring hemiacetal intermediate and thus facilitating the formation of a five-membered ring to produce asperfuranone. In Aspergillus terreus, ATEG_07660 is probably not functional, which leads to the formation of the six-membered ring hemiacetal intermediate presperpyranone instead of asperfuranone. Finally, ATEG_03636 is involved in the condensation of the polyhydric phenol moiety produced by cluster A and the perasperpyranone precursor produced by cluster B, to yield azasperpyranone A. Further modifications of azasperpyranone A result in the production of derivatives, including azasperpyranone B to F. In Aspergillus terreus (strain NIH 2624 / FGSC A1156), this protein is 5-methylorsellinic acid synthase.